A 652-amino-acid polypeptide reads, in one-letter code: Vacuolar fusion protein MON1 homolog A (652 aa).

The tract at residues 102-141 is disordered; it reads MQRKRSSECLDGTLTPSDGQSMERAESPTPGMAQGMEPGA. Phosphoserine occurs at positions 128 and 153. T158 carries the phosphothreonine modification. The tract at residues 158 to 185 is disordered; sequence TESEDGAASGDSHKEGTRGPPPLPTDMR. Phosphoserine is present on S188. Residues 211-245 are disordered; that stretch reads PGSSEDWLEPPGAVGRPATEPPREGTTEGDEEDAT.

The protein belongs to the MON1/SAND family. As to quaternary structure, interacts with CCZ1. Found in a complex with RMC1, CCZ1, MON1A and MON1B. The MON1A-CCZ1B complex interacts with RIMOC1. The MON1A-CCZ1B complex interacts with RAB7A and this interaction is enhanced in the presence of RIMOC1.

In terms of biological role, plays an important role in membrane trafficking through the secretory apparatus. Not involved in endocytic trafficking to lysosomes. Acts in concert with CCZ1, as a guanine exchange factor (GEF) for RAB7, promotes the exchange of GDP to GTP, converting it from an inactive GDP-bound form into an active GTP-bound form. The polypeptide is Vacuolar fusion protein MON1 homolog A (MON1A) (Homo sapiens (Human)).